Consider the following 153-residue polypeptide: Alpha-amylase type B isozyme (153 aa).

Substrate-binding positions include Lys19, 25–27, His38, Gln44, Lys123, and Trp150; that span reads GWW.

This sequence belongs to the glycosyl hydrolase 13 family. As to quaternary structure, monomer. The cofactor is Ca(2+).

It carries out the reaction Endohydrolysis of (1-&gt;4)-alpha-D-glucosidic linkages in polysaccharides containing three or more (1-&gt;4)-alpha-linked D-glucose units.. This Hordeum vulgare (Barley) protein is Alpha-amylase type B isozyme (AMY1.4).